The primary structure comprises 243 residues: Terpene cyclase dpmaB (243 aa).

6 helical membrane-spanning segments follow: residues 11-31, 51-71, 112-132, 141-161, 169-189, and 207-227; these read PGYL…GLGW, ALMP…IYPF, LPFI…ALAL, AFSA…QLLS, SYFL…QDVL, and IWFV…LWYV.

Belongs to the paxB family.

It localises to the membrane. Its pathway is secondary metabolite biosynthesis; terpenoid biosynthesis. Its function is as follows. Terpene cyclase; part of the gene cluster that mediates the biosynthesis of the diterpenoid pyrones subglutinols A and B. The first step of the pathway is the synthesis of the alpha-pyrone moiety by the polyketide synthase dpmaA via condensation of one acetyl-CoA starter unit with 3 malonyl-CoA units and 2 methylations. The alpha-pyrone is then combined with geranylgeranyl pyrophosphate (GGPP) formed by the GGPP synthase dpmaD through the action of the prenyltransferase dpmaC to yield a linear alpha-pyrone diterpenoid. Subsequent steps in the diterpenoid pyrone biosynthetic pathway involve the decalin core formation, which is initiated by the epoxidation of the C10-C11 olefin by the FAD-dependent oxidoreductase dpmaE, and is followed by a cyclization cascade catalyzed by the terpene cyclase dpmaB. The dehydrogenase dpmaF is then involved in tetrahydrofuran (THF) ring formation at the C5 unit to complete the formation of subglutinols A and B. The chain is Terpene cyclase dpmaB from Metarhizium anisopliae (Entomophthora anisopliae).